A 195-amino-acid polypeptide reads, in one-letter code: Pyridoxal 5'-phosphate synthase subunit PdxT (195 aa).

46 to 48 (GES) provides a ligand contact to L-glutamine. Cysteine 78 acts as the Nucleophile in catalysis. Residues arginine 107 and 136–137 (IR) contribute to the L-glutamine site. Residues histidine 173 and glutamate 175 each act as charge relay system in the active site.

It belongs to the glutaminase PdxT/SNO family. In terms of assembly, in the presence of PdxS, forms a dodecamer of heterodimers. Only shows activity in the heterodimer.

It carries out the reaction aldehydo-D-ribose 5-phosphate + D-glyceraldehyde 3-phosphate + L-glutamine = pyridoxal 5'-phosphate + L-glutamate + phosphate + 3 H2O + H(+). The enzyme catalyses L-glutamine + H2O = L-glutamate + NH4(+). It functions in the pathway cofactor biosynthesis; pyridoxal 5'-phosphate biosynthesis. In terms of biological role, catalyzes the hydrolysis of glutamine to glutamate and ammonia as part of the biosynthesis of pyridoxal 5'-phosphate. The resulting ammonia molecule is channeled to the active site of PdxS. This chain is Pyridoxal 5'-phosphate synthase subunit PdxT, found in Dehalococcoides mccartyi (strain CBDB1).